A 443-amino-acid chain; its full sequence is Thymidine phosphorylase (443 aa).

It belongs to the thymidine/pyrimidine-nucleoside phosphorylase family. As to quaternary structure, homodimer.

The catalysed reaction is thymidine + phosphate = 2-deoxy-alpha-D-ribose 1-phosphate + thymine. It participates in pyrimidine metabolism; dTMP biosynthesis via salvage pathway; dTMP from thymine: step 1/2. In terms of biological role, the enzymes which catalyze the reversible phosphorolysis of pyrimidine nucleosides are involved in the degradation of these compounds and in their utilization as carbon and energy sources, or in the rescue of pyrimidine bases for nucleotide synthesis. The chain is Thymidine phosphorylase from Shewanella baltica (strain OS155 / ATCC BAA-1091).